We begin with the raw amino-acid sequence, 321 residues long: Glucokinase (321 aa).

8–13 (GDVGGT) provides a ligand contact to ATP.

The protein belongs to the bacterial glucokinase family.

It localises to the cytoplasm. The catalysed reaction is D-glucose + ATP = D-glucose 6-phosphate + ADP + H(+). The protein is Glucokinase of Erwinia tasmaniensis (strain DSM 17950 / CFBP 7177 / CIP 109463 / NCPPB 4357 / Et1/99).